Reading from the N-terminus, the 489-residue chain is UDP-N-acetylmuramoyl-L-alanyl-D-glutamate--2,6-diaminopimelate ligase (489 aa).

Serine 32 is a binding site for UDP-N-acetyl-alpha-D-muramoyl-L-alanyl-D-glutamate. 113–119 is a binding site for ATP; sequence GTNGKTT. Residues 154 to 155, serine 181, glutamine 187, and arginine 189 each bind UDP-N-acetyl-alpha-D-muramoyl-L-alanyl-D-glutamate; that span reads TT. N6-carboxylysine is present on lysine 221. Residues arginine 381, 405 to 408, glycine 456, and glutamate 460 contribute to the meso-2,6-diaminopimelate site; that span reads DNPR. The short motif at 405–408 is the Meso-diaminopimelate recognition motif element; the sequence is DNPR.

This sequence belongs to the MurCDEF family. MurE subfamily. Requires Mg(2+) as cofactor. Post-translationally, carboxylation is probably crucial for Mg(2+) binding and, consequently, for the gamma-phosphate positioning of ATP.

Its subcellular location is the cytoplasm. It carries out the reaction UDP-N-acetyl-alpha-D-muramoyl-L-alanyl-D-glutamate + meso-2,6-diaminopimelate + ATP = UDP-N-acetyl-alpha-D-muramoyl-L-alanyl-gamma-D-glutamyl-meso-2,6-diaminopimelate + ADP + phosphate + H(+). It participates in cell wall biogenesis; peptidoglycan biosynthesis. Catalyzes the addition of meso-diaminopimelic acid to the nucleotide precursor UDP-N-acetylmuramoyl-L-alanyl-D-glutamate (UMAG) in the biosynthesis of bacterial cell-wall peptidoglycan. The chain is UDP-N-acetylmuramoyl-L-alanyl-D-glutamate--2,6-diaminopimelate ligase from Gloeobacter violaceus (strain ATCC 29082 / PCC 7421).